The following is a 251-amino-acid chain: Cholesterol 25-hydroxylase-like protein (251 aa).

The next 3 helical transmembrane spans lie at 22–42 (FFPV…FVLL), 69–89 (WSCL…LSVL), and 108–128 (VVWD…VWHL). The Fatty acid hydroxylase domain maps to 113–247 (AACLLLFDFQ…FTHWDKLFGT (135 aa)). A Histidine box-1 motif is present at residues 126 to 130 (WHLLH). The short motif at 141 to 145 (HKVHH) is the Histidine box-2 element. Positions 222 to 228 (HHDVHHQ) match the Histidine box-3 motif.

It belongs to the sterol desaturase family. Fe cation serves as cofactor.

The protein resides in the endoplasmic reticulum membrane. It catalyses the reaction cholesterol + AH2 + O2 = 25-hydroxycholesterol + A + H2O. It carries out the reaction cholesterol + NADPH + O2 + H(+) = 25-hydroxycholesterol + NADP(+) + H2O. In terms of biological role, catalyzes the formation of 25-hydroxycholesterol from cholesterol, leading to repress cholesterol biosynthetic enzymes. Plays a key role in cell positioning and movement in lymphoid tissues: 25-hydroxycholesterol is an intermediate in biosynthesis of 7-alpha,25-dihydroxycholesterol (7-alpha,25-OHC), an oxysterol that acts as a ligand for the G protein-coupled receptor GPR183/EBI2, a chemotactic receptor for a number of lymphoid cells. May play an important role in regulating lipid metabolism by synthesizing a corepressor that blocks sterol regulatory element binding protein (SREBP) processing. In testis, production of 25-hydroxycholesterol by macrophages may play a role in Leydig cell differentiation. The chain is Cholesterol 25-hydroxylase-like protein (ch25h) from Danio rerio (Zebrafish).